A 244-amino-acid polypeptide reads, in one-letter code: Phosphoadenosine 5'-phosphosulfate reductase (244 aa).

Residue Cys-239 is the Nucleophile; cysteine thiosulfonate intermediate of the active site.

Belongs to the PAPS reductase family. CysH subfamily.

It localises to the cytoplasm. The catalysed reaction is [thioredoxin]-disulfide + sulfite + adenosine 3',5'-bisphosphate + 2 H(+) = [thioredoxin]-dithiol + 3'-phosphoadenylyl sulfate. It functions in the pathway sulfur metabolism; hydrogen sulfide biosynthesis; sulfite from sulfate: step 3/3. Functionally, catalyzes the formation of sulfite from phosphoadenosine 5'-phosphosulfate (PAPS) using thioredoxin as an electron donor. The sequence is that of Phosphoadenosine 5'-phosphosulfate reductase from Salmonella heidelberg (strain SL476).